The sequence spans 363 residues: 3-dehydroquinate synthase (363 aa).

NAD(+) is bound by residues Thr-134–Thr-135, Lys-147, and Lys-156. Zn(2+) contacts are provided by Glu-189, His-254, and His-271.

This sequence belongs to the sugar phosphate cyclases superfamily. Dehydroquinate synthase family. Co(2+) serves as cofactor. It depends on Zn(2+) as a cofactor. The cofactor is NAD(+).

It localises to the cytoplasm. The enzyme catalyses 7-phospho-2-dehydro-3-deoxy-D-arabino-heptonate = 3-dehydroquinate + phosphate. It participates in metabolic intermediate biosynthesis; chorismate biosynthesis; chorismate from D-erythrose 4-phosphate and phosphoenolpyruvate: step 2/7. Functionally, catalyzes the conversion of 3-deoxy-D-arabino-heptulosonate 7-phosphate (DAHP) to dehydroquinate (DHQ). The polypeptide is 3-dehydroquinate synthase (Prochlorococcus marinus (strain MIT 9312)).